The sequence spans 325 residues: Pectinesterase A (325 aa).

The first 18 residues, 1-18 (MRVQSYLSLFSLVGAALC), serve as a signal peptide directing secretion. Asn-126 carries an N-linked (GlcNAc...) asparagine glycan. Residue Gln-143 coordinates substrate. The active-site Proton donor is Asp-166. Residue Asp-187 is the Nucleophile of the active site. The substrate site is built by Arg-247 and Trp-249.

It belongs to the pectinesterase family.

The protein resides in the secreted. The catalysed reaction is [(1-&gt;4)-alpha-D-galacturonosyl methyl ester](n) + n H2O = [(1-&gt;4)-alpha-D-galacturonosyl](n) + n methanol + n H(+). It participates in glycan metabolism; pectin degradation; 2-dehydro-3-deoxy-D-gluconate from pectin: step 1/5. In terms of biological role, involved in maceration and soft-rotting of plant tissue. Active against citrus pectin. The polypeptide is Pectinesterase A (pmeA) (Emericella nidulans (strain FGSC A4 / ATCC 38163 / CBS 112.46 / NRRL 194 / M139) (Aspergillus nidulans)).